The sequence spans 550 residues: Tyrosinase HcTyr2 (550 aa).

6 residues coordinate Cu cation: His-56, His-84, His-93, His-282, His-286, and His-326.

It belongs to the tyrosinase family. It depends on Cu(2+) as a cofactor.

The enzyme catalyses L-tyrosine + O2 = L-dopaquinone + H2O. The catalysed reaction is 2 L-tyrosine + O2 = 2 L-dopa. It carries out the reaction 2 L-dopa + O2 = 2 L-dopaquinone + 2 H2O. In terms of biological role, copper-containing oxidase that catalyzes the conversion of L-tyrosine to L-dopa and then to L-dopaquinone. Can use various phenols such as p-coumaric acid, phenol, pyrocatechol, syringol or pyrogallol. Accepts several of the constituents of lignin and potentially participates in lignin functionalization. This is Tyrosinase HcTyr2 from Hahella sp. (strain CCB-MM4).